The following is a 178-amino-acid chain: MORN repeat-containing protein 5 (178 aa).

MORN repeat units lie at residues 8–30 (YDGD…THTR), 31–53 (YVGE…NGSK), and 54–75 (YEGT…DGLK).

The protein localises to the cell projection. It is found in the cilium. Its subcellular location is the flagellum. The sequence is that of MORN repeat-containing protein 5 (morn5) from Danio rerio (Zebrafish).